Reading from the N-terminus, the 466-residue chain is MAKTLYEKVWDSHVVVAPEGEAPIIYVDRHLVHEVTSPQAFSGVKVAGRQLRAPQKTFATMDHNTSTTSASLDALSPMARTQVETLEQNCKEFGVRLYDIHHKNQGIVHVMGPELGITLPGTVIVCGDSHTATHGAFGALAFGIGTSEVEHVMATQTLRQLKAKTMKIEVRGHVASGITAKDIVLAIIGKIGMDGGTGYVVEFCGEAIEALSMEGRMTVCNMAIEMGAKAGMIAPDATTAEYLEGREFSPKGESWSQAVAAWEQLKTDEGAVFDASVVLDAIDIAPQLTWGTNPGQVVAIDQLVPNPLDATNSTVRSSIEKALEYVDLTAGTLMTDVSINKVFIGSCTNSRIEDLRAAAVHAKGRKVADGVKAIVVPGSGLVKEQAEAEGLDKIFTDAGFEWRLPGCSMCLAMNDDKLEAGDRCASTSNRNFEGRQGRGSRTHLVSPAMAAAAAVAGHFVDIRKPY.

The [4Fe-4S] cluster site is built by Cys347, Cys407, and Cys410.

This sequence belongs to the aconitase/IPM isomerase family. LeuC type 1 subfamily. As to quaternary structure, heterodimer of LeuC and LeuD. Requires [4Fe-4S] cluster as cofactor.

The enzyme catalyses (2R,3S)-3-isopropylmalate = (2S)-2-isopropylmalate. It functions in the pathway amino-acid biosynthesis; L-leucine biosynthesis; L-leucine from 3-methyl-2-oxobutanoate: step 2/4. In terms of biological role, catalyzes the isomerization between 2-isopropylmalate and 3-isopropylmalate, via the formation of 2-isopropylmaleate. In Shewanella pealeana (strain ATCC 700345 / ANG-SQ1), this protein is 3-isopropylmalate dehydratase large subunit.